Here is a 1415-residue protein sequence, read N- to C-terminus: G8 domain-containing protein DDB_G0278975 (1415 aa).

The signal sequence occupies residues 1–24 (MKINKIILFFFLSCLYLFSSSVSA). Transmembrane regions (helical) follow at residues 107-127 (INLN…GLFT) and 138-158 (LLFI…SIKI). N-linked (GlcNAc...) asparagine glycans are attached at residues N245, N366, N428, N466, and N579. The region spanning 566–692 (STWPNGIIPS…YHNTWSKLSA (127 aa)) is the G8 domain. PbH1 repeat units follow at residues 819 to 841 (LKNS…TIHG) and 842 to 864 (TNNV…YLED). Residues N844, N985, N1009, N1023, N1099, N1244, and N1342 are each glycosylated (N-linked (GlcNAc...) asparagine).

This sequence belongs to the comF family.

The protein localises to the membrane. The chain is G8 domain-containing protein DDB_G0278975 from Dictyostelium discoideum (Social amoeba).